Reading from the N-terminus, the 175-residue chain is RNA pyrophosphohydrolase (175 aa).

A Nudix hydrolase domain is found at 6–149 (GYRPNVGIVI…KRDVYRRVMK (144 aa)). Residues 38–59 (GGINPGETAEQAMYRELFEEVG) carry the Nudix box motif.

The protein belongs to the Nudix hydrolase family. RppH subfamily. Requires a divalent metal cation as cofactor.

Accelerates the degradation of transcripts by removing pyrophosphate from the 5'-end of triphosphorylated RNA, leading to a more labile monophosphorylated state that can stimulate subsequent ribonuclease cleavage. In Serratia proteamaculans (strain 568), this protein is RNA pyrophosphohydrolase.